The chain runs to 295 residues: 4-hydroxy-tetrahydrodipicolinate synthase (295 aa).

Thr-47 is a pyruvate binding site. The Proton donor/acceptor role is filled by Tyr-135. Residue Lys-163 is the Schiff-base intermediate with substrate of the active site. Ile-206 is a pyruvate binding site.

This sequence belongs to the DapA family. Homodimer.

The protein resides in the cytoplasm. The catalysed reaction is L-aspartate 4-semialdehyde + pyruvate = (2S,4S)-4-hydroxy-2,3,4,5-tetrahydrodipicolinate + H2O + H(+). Its pathway is amino-acid biosynthesis; L-lysine biosynthesis via DAP pathway; (S)-tetrahydrodipicolinate from L-aspartate: step 3/4. With respect to regulation, is not feedback inhibited by lysine. In terms of biological role, catalyzes the condensation of (S)-aspartate-beta-semialdehyde [(S)-ASA] and pyruvate to 4-hydroxy-tetrahydrodipicolinate (HTPA). This is 4-hydroxy-tetrahydrodipicolinate synthase from Staphylococcus aureus (strain COL).